We begin with the raw amino-acid sequence, 476 residues long: Proline--tRNA ligase (476 aa).

Belongs to the class-II aminoacyl-tRNA synthetase family. ProS type 3 subfamily. As to quaternary structure, homodimer.

The protein localises to the cytoplasm. The enzyme catalyses tRNA(Pro) + L-proline + ATP = L-prolyl-tRNA(Pro) + AMP + diphosphate. In terms of biological role, catalyzes the attachment of proline to tRNA(Pro) in a two-step reaction: proline is first activated by ATP to form Pro-AMP and then transferred to the acceptor end of tRNA(Pro). This chain is Proline--tRNA ligase, found in Cenarchaeum symbiosum (strain A).